Here is a 691-residue protein sequence, read N- to C-terminus: Dipeptidyl-peptidase 5 (691 aa).

The signal sequence occupies residues Met1–Ala20. Residues Ser549, Asp634, and His666 each act as charge relay system in the active site.

Belongs to the peptidase S9C family. In terms of assembly, homodimer.

The protein resides in the periplasm. Functionally, catalyzes the removal of dipeptides from the N-terminus of oligopeptides. Prefers Ala and hydrophobic residues at the P1 position, and has no preference for P2 residues. Shows the highest dipeptidyl peptidase activity toward the synthetic substrate Lys-Ala-methylcoumaryl-7-amide (Lys-Ala-MCA). Is likely involved in amino acid metabolism and bacterial growth/survival of asaccharolytic P.endodontalis, that utilizes amino acids from extracellular proteinaceous nutrients as energy and carbon sources. This is Dipeptidyl-peptidase 5 from Porphyromonas endodontalis (strain ATCC 35406 / DSM 24491 / JCM 8526 / CCUG 16442 / BCRC 14492 / NCTC 13058 / HG 370) (Bacteroides endodontalis).